The following is a 427-amino-acid chain: MKYFGTDGIRGIFGETLTDELAFKVGKALGEIVGEGRVIVGKDTRVSGDSLEAAISAGLTSMGVDVLLCGIIPTPAVALLTRITRSFGVVISASHNPPEYNGIKVLKGGYKIPDEMEAEIEERLENGSFPPRLVVGRTKSFREGRDMYIGAVLEIFRDLDLTGEMVSLDLANGATTTTAKEVFEFLGAKVEVFNDSQDGLLINQGCGATHPRFLAEEMKNGKVGFTFDGDGDRVIAVDEERNVVNGDRIIGILAVGLKEEGRLNSDTVVGTVMTNGGLEDFLKEKGIKLLRTKVGDKYVLEKMLESGANLGGERSGHIIILDRSTTGDGLITALELMRVLRRSGRNLSDFAKEIPDYPQITKNVRRTERMSLENENLRKIVEESTSRGYRVVIRPSGTEPVIRITVEGKDREEIEKIVEEISRVLES.

The Phosphoserine intermediate role is filled by Ser-94. Residues Ser-94, Asp-228, Asp-230, and Asp-232 each coordinate Mg(2+). Ser-94 is modified (phosphoserine).

The protein belongs to the phosphohexose mutase family. Requires Mg(2+) as cofactor. Post-translationally, activated by phosphorylation.

The enzyme catalyses alpha-D-glucosamine 1-phosphate = D-glucosamine 6-phosphate. Its function is as follows. Catalyzes the conversion of glucosamine-6-phosphate to glucosamine-1-phosphate. This chain is Phosphoglucosamine mutase, found in Thermotoga sp. (strain RQ2).